The primary structure comprises 524 residues: MKKYVIVTGGVLSGIGKGIFSASLARLMKEHGVDVNVLKIDPYLNVDAGTMNPNQHGEVFVTEDGYEADLDLGHYERFLGRDMTRQNNMTAGQVYLRVIEKERQGKYLGNTVQIVPHLTEEIKDRIRALEAELLVVEIGGTVGDIEGEVFLEAVRELQMEEGKENFLFAHVTYVPYLRTTNEFKTKPTQQSVQLLRRIGITPDMVIVRSEFPLDVPSMNKVALFSGVPRDFVINLPDTKNVYEVPEILRDMGLHEKIASKLNVELKKSTFNWSYPKAFKPYRIALVGKYLGTDDAYKSIIESVFLTGIEKPTVVDSQMLEDMNDEEVKKVLDEYDALIIPGGFGRRGVEGKIKAIKYARENKKPILGICLGMQLMVIEFARNVFGYKEANSTEFDPNTPYPVVDLMEEQKRILKLGGTMRLGAQKVKIFPKTKLYEVYGGVEEVYERHRHRYEANEEAFPELFKKPGEEGYKLVVSAKSDFIEAVELEDHPFFVGVQFHPEYKSKVGAPHPIFVYLRKVLEGSQ.

An amidoligase domain region spans residues 1-263 (MKKYVIVTGG…HEKIASKLNV (263 aa)). Ser-13 contributes to the CTP binding site. Position 13 (Ser-13) interacts with UTP. ATP contacts are provided by residues 14–19 (GIGKGI) and Asp-71. Residues Asp-71 and Glu-137 each contribute to the Mg(2+) site. CTP is bound by residues 144–146 (DIE), 184–189 (KTKPTQ), and Lys-220. UTP is bound by residues 184-189 (KTKPTQ) and Lys-220. One can recognise a Glutamine amidotransferase type-1 domain in the interval 282–524 (RIALVGKYLG…YLRKVLEGSQ (243 aa)). Gly-342 contributes to the L-glutamine binding site. Catalysis depends on Cys-369, which acts as the Nucleophile; for glutamine hydrolysis. L-glutamine contacts are provided by residues 370–373 (LGMQ), Glu-393, and Arg-451. Active-site residues include His-499 and Glu-501.

This sequence belongs to the CTP synthase family. As to quaternary structure, homotetramer.

The catalysed reaction is UTP + L-glutamine + ATP + H2O = CTP + L-glutamate + ADP + phosphate + 2 H(+). It carries out the reaction L-glutamine + H2O = L-glutamate + NH4(+). The enzyme catalyses UTP + NH4(+) + ATP = CTP + ADP + phosphate + 2 H(+). It functions in the pathway pyrimidine metabolism; CTP biosynthesis via de novo pathway; CTP from UDP: step 2/2. Its activity is regulated as follows. Allosterically activated by GTP, when glutamine is the substrate; GTP has no effect on the reaction when ammonia is the substrate. The allosteric effector GTP functions by stabilizing the protein conformation that binds the tetrahedral intermediate(s) formed during glutamine hydrolysis. Inhibited by the product CTP, via allosteric rather than competitive inhibition. In terms of biological role, catalyzes the ATP-dependent amination of UTP to CTP with either L-glutamine or ammonia as the source of nitrogen. Regulates intracellular CTP levels through interactions with the four ribonucleotide triphosphates. This Thermotoga maritima (strain ATCC 43589 / DSM 3109 / JCM 10099 / NBRC 100826 / MSB8) protein is CTP synthase.